Consider the following 434-residue polypeptide: Chaperone SurA (434 aa).

The N-terminal stretch at methionine 1 to alanine 20 is a signal peptide. 2 consecutive PpiC domains span residues aspartate 171–aspartate 272 and valine 282–aspartate 382.

The protein resides in the periplasm. The enzyme catalyses [protein]-peptidylproline (omega=180) = [protein]-peptidylproline (omega=0). Its function is as follows. Chaperone involved in the correct folding and assembly of outer membrane proteins. Recognizes specific patterns of aromatic residues and the orientation of their side chains, which are found more frequently in integral outer membrane proteins. May act in both early periplasmic and late outer membrane-associated steps of protein maturation. The protein is Chaperone SurA of Yersinia pestis bv. Antiqua (strain Antiqua).